The following is a 354-amino-acid chain: Guanine nucleotide-binding protein G(i) subunit alpha-1 (354 aa).

G2 is lipidated: N-myristoyl glycine. C3 carries the S-palmitoyl cysteine lipid modification. Residues R32–F354 enclose the G-alpha domain. The G1 motif stretch occupies residues K35–T48. Residues E43 to T48, D150 to S151, and L175 to R178 contribute to the GTP site. Position 47 (S47) interacts with Mg(2+). The tract at residues D173–T181 is G2 motif. T181 contributes to the Mg(2+) binding site. The interval F196–R205 is G3 motif. GTP contacts are provided by residues D200 to Q204, N269 to D272, and A326. The G4 motif stretch occupies residues I265–D272. The tract at residues T324–T329 is G5 motif.

This sequence belongs to the G-alpha family. G(i/o/t/z) subfamily. Heterotrimeric G proteins are composed of 3 units; alpha, beta and gamma. The alpha chain contains the guanine nucleotide binding site. Part of a spindle orientation complex at least composed of GNAI1, GPSM2 and NUMA1. Identified in complex with the beta subunit GNB1 and the gamma subunit GNG1. Identified in complex with the beta subunit GNB1 and the gamma subunit GNG2. Component of the TAS2R14-GNAI1 complex, consisting of TAS2R14, GNAI1, GNB1 and GNG2; within the complex interacts with TAS2R14; this complex plays a role in the perception of bitterness. GTP binding causes dissociation of the heterotrimer, liberating the individual subunits so that they can interact with downstream effector proteins. Interacts (GDP-bound form) with GPSM1; this inhibits guanine nucleotide exchange and GTP binding. Interacts (GDP-bound form) with GPSM2 (via GoLoco domains); this inhibits guanine nucleotide exchange. Interacts with RGS10; this strongly enhances GTP hydrolysis. Interacts with RGS1 and RGS16. Interacts with RGS4. Interacts with RGS12. Interacts (via active GTP- or inactive GDP-bound forms) with RGS14 (via RGS and GoLoco domains). Interacts with RGS3, RGS6, RGS7, RGS8, RGS17, RGS18 and RGS20 (in vitro). Interacts (GDP-bound form) with RIC8A (via C-terminus); promoting GNAI1 folding and association with the plasma membrane. Interacts (inactive GDP-bound form) with NUCB1 (via GBA motif); the interaction leads to activation of GNAI1. Interacts (inactive GDP-bound form) with CCDC88C/DAPLE (via GBA motif); the interaction leads to activation of GNAI1. Interacts (inactive GDP-bound form) with CCDC8A/GIV (via GBA motif). Interacts with GPR15. Myristoylation at Gly-2 is required for membrane anchoring before palmitoylation. Post-translationally, palmitoylation at Cys-3 varies with membrane lipid composition.

The protein localises to the nucleus. Its subcellular location is the cytoplasm. It localises to the cell membrane. It is found in the cytoskeleton. The protein resides in the microtubule organizing center. The protein localises to the centrosome. Its subcellular location is the cell cortex. It localises to the membrane. The catalysed reaction is GTP + H2O = GDP + phosphate + H(+). Guanine nucleotide-binding proteins (G proteins) function as transducers downstream of G protein-coupled receptors (GPCRs) in numerous signaling cascades. The alpha chain contains the guanine nucleotide binding site and alternates between an active, GTP-bound state and an inactive, GDP-bound state. Signaling by an activated GPCR promotes GDP release and GTP binding. The alpha subunit has a low GTPase activity that converts bound GTP to GDP, thereby terminating the signal. Both GDP release and GTP hydrolysis are modulated by numerous regulatory proteins. Signaling is mediated via effector proteins, such as adenylate cyclase. Inhibits adenylate cyclase activity of ADCY1, ADCY5 and ADCY6, leading to decreased intracellular cAMP levels. The inactive GDP-bound form prevents the association of RGS14 with centrosomes and is required for the translocation of RGS14 from the cytoplasm to the plasma membrane. Required for normal cytokinesis during mitosis. Required for cortical dynein-dynactin complex recruitment during metaphase. The sequence is that of Guanine nucleotide-binding protein G(i) subunit alpha-1 (Gnai1) from Rattus norvegicus (Rat).